The following is a 361-amino-acid chain: Polyribonucleotide 5'-hydroxyl-kinase MJ1315 (361 aa).

Position 39 to 46 (39 to 46 (GGVDSGKT)) interacts with ATP.

A divalent metal cation serves as cofactor.

It catalyses the reaction a 5'-end dephospho-2'-deoxyribonucleoside-DNA + ATP = a 5'-end 5'-phospho-2'-deoxyribonucleoside-DNA + ADP + H(+). The catalysed reaction is a 5'-end dephospho-ribonucleoside-RNA + ATP = a 5'-end 5'-phospho-ribonucleoside-RNA + ADP + H(+). In terms of biological role, polynucleotide kinase that can phosphorylate the 5'-hydroxyl groups of both single-stranded RNA (ssRNA) and single-stranded DNA (ssDNA). Exhibits a strong preference for ssRNA. This is Polyribonucleotide 5'-hydroxyl-kinase MJ1315 from Methanocaldococcus jannaschii (strain ATCC 43067 / DSM 2661 / JAL-1 / JCM 10045 / NBRC 100440) (Methanococcus jannaschii).